Reading from the N-terminus, the 472-residue chain is Arginine biosynthesis bifunctional protein ArgJ, mitochondrial (472 aa).

6 residues coordinate substrate: Thr200, Lys229, Thr240, Glu327, Asn467, and Thr472. Residue Thr240 is the Nucleophile of the active site.

The protein belongs to the ArgJ family. Heterodimer of an alpha and a beta chain. The alpha and beta chains are autoproteolytically processed from a single precursor protein within the mitochondrion.

It localises to the mitochondrion matrix. It carries out the reaction N(2)-acetyl-L-ornithine + L-glutamate = N-acetyl-L-glutamate + L-ornithine. The catalysed reaction is L-glutamate + acetyl-CoA = N-acetyl-L-glutamate + CoA + H(+). It participates in amino-acid biosynthesis; L-arginine biosynthesis; L-ornithine and N-acetyl-L-glutamate from L-glutamate and N(2)-acetyl-L-ornithine (cyclic): step 1/1. The protein operates within amino-acid biosynthesis; L-arginine biosynthesis; N(2)-acetyl-L-ornithine from L-glutamate: step 1/4. Catalyzes two activities which are involved in the cyclic version of arginine biosynthesis: the synthesis of acetylglutamate from glutamate and acetyl-CoA, and of ornithine by transacetylation between acetylornithine and glutamate. This chain is Arginine biosynthesis bifunctional protein ArgJ, mitochondrial, found in Talaromyces marneffei (strain ATCC 18224 / CBS 334.59 / QM 7333) (Penicillium marneffei).